The sequence spans 507 residues: Probable allantoinase (507 aa).

The Zn(2+) site is built by histidine 105, histidine 107, lysine 195, histidine 231, histidine 294, and aspartate 368. Position 195 is an N6-carboxylysine (lysine 195).

This sequence belongs to the metallo-dependent hydrolases superfamily. Allantoinase family. Homotetramer. Requires Zn(2+) as cofactor. Post-translationally, carboxylation allows a single lysine to coordinate two zinc ions.

The catalysed reaction is (S)-allantoin + H2O = allantoate + H(+). The protein operates within nitrogen metabolism; (S)-allantoin degradation; allantoate from (S)-allantoin: step 1/1. Its function is as follows. Catalyzes the conversion of allantoin (5-ureidohydantoin) to allantoate by hydrolytic cleavage of the five-member hydantoin ring. Catalyzes the first step of the ureide allantoin degradation followed by the sequential activity of AAH, UGLYAH and UAH which allows a complete purine breakdown without the intermediate generation of urea. The sequence is that of Probable allantoinase (ALN) from Oryza sativa subsp. japonica (Rice).